Consider the following 275-residue polypeptide: Ribosomal RNA small subunit methyltransferase A (275 aa).

S-adenosyl-L-methionine contacts are provided by Asn-19, Leu-21, Gly-46, Glu-71, Asp-94, and Asn-117.

The protein belongs to the class I-like SAM-binding methyltransferase superfamily. rRNA adenine N(6)-methyltransferase family. RsmA subfamily.

The protein localises to the cytoplasm. It carries out the reaction adenosine(1518)/adenosine(1519) in 16S rRNA + 4 S-adenosyl-L-methionine = N(6)-dimethyladenosine(1518)/N(6)-dimethyladenosine(1519) in 16S rRNA + 4 S-adenosyl-L-homocysteine + 4 H(+). Functionally, specifically dimethylates two adjacent adenosines (A1518 and A1519) in the loop of a conserved hairpin near the 3'-end of 16S rRNA in the 30S particle. May play a critical role in biogenesis of 30S subunits. The polypeptide is Ribosomal RNA small subunit methyltransferase A (Burkholderia multivorans (strain ATCC 17616 / 249)).